The following is a 37-amino-acid chain: Large ribosomal subunit protein bL36c (37 aa).

The protein belongs to the bacterial ribosomal protein bL36 family.

It is found in the plastid. The protein resides in the chloroplast. The chain is Large ribosomal subunit protein bL36c from Cyanidioschyzon merolae (strain NIES-3377 / 10D) (Unicellular red alga).